We begin with the raw amino-acid sequence, 98 residues long: NADH-ubiquinone oxidoreductase chain 4L (98 aa).

The next 3 helical transmembrane spans lie at 2 to 22 (PSISININLAFAAALLGMLMF), 29 to 49 (SLLCLEGMMLSMFTLSTLTIL), and 61 to 81 (ILLLVFAACEAAIGLALLVMV).

This sequence belongs to the complex I subunit 4L family. As to quaternary structure, core subunit of respiratory chain NADH dehydrogenase (Complex I) which is composed of 45 different subunits.

Its subcellular location is the mitochondrion inner membrane. The catalysed reaction is a ubiquinone + NADH + 5 H(+)(in) = a ubiquinol + NAD(+) + 4 H(+)(out). Its function is as follows. Core subunit of the mitochondrial membrane respiratory chain NADH dehydrogenase (Complex I) which catalyzes electron transfer from NADH through the respiratory chain, using ubiquinone as an electron acceptor. Part of the enzyme membrane arm which is embedded in the lipid bilayer and involved in proton translocation. The polypeptide is NADH-ubiquinone oxidoreductase chain 4L (MT-ND4L) (Microcebus mittermeieri (Mittermeier's mouse lemur)).